Consider the following 139-residue polypeptide: Dehydrin DHN1 (139 aa).

Residues 1-139 are disordered; it reads MEYQGQHGHA…IKEKLPGGQH (139 aa). The segment covering 23–42 has biased composition (gly residues); it reads GHGGFTGGPTGTHGAAGVGG. The span at 49-58 shows a compositional bias: basic and acidic residues; the sequence is RDGHKTDGVL. A compositionally biased stretch (low complexity) spans 59-68; sequence RRSGSSSSSS. Over residues 83 to 98 the composition is skewed to basic and acidic residues; it reads KEKIKEKLPGGAHKDA. The segment covering 99 to 109 has biased composition (low complexity); the sequence is AGQQQQTAMAG. The span at 120 to 139 shows a compositional bias: basic and acidic residues; that stretch reads TGEKKGVMDKIKEKLPGGQH.

This sequence belongs to the plant dehydrin family.

The protein is Dehydrin DHN1 (DHN1) of Hordeum vulgare (Barley).